Consider the following 521-residue polypeptide: Alkyl hydroperoxide reductase subunit F (521 aa).

Lysine 53 bears the N6-acetyllysine mark. 214–229 provides a ligand contact to FAD; that stretch reads DVLIVGSGPAGAAAAI. The cysteines at positions 345 and 348 are disulfide-linked. Lysine 354 carries the N6-acetyllysine modification. NAD(+) is bound at residue 357–371; it reads RVAVIGGGNSGVEAA. Residue 478 to 488 coordinates FAD; the sequence is TNVKGVFAAGD.

It belongs to the class-II pyridine nucleotide-disulfide oxidoreductase family. As to quaternary structure, homodimer. FAD is required as a cofactor.

Its function is as follows. Serves to protect the cell against DNA damage by alkyl hydroperoxides. It can use either NADH or NADPH as electron donor for direct reduction of redox dyes or of alkyl hydroperoxides when combined with the AhpC protein. The protein is Alkyl hydroperoxide reductase subunit F (ahpF) of Escherichia coli (strain K12).